The sequence spans 207 residues: Proteasome subunit beta 2 (207 aa).

Positions methionine 1–glycine 13 are cleaved as a propeptide — removed in mature form; by autocatalysis. Catalysis depends on threonine 14, which acts as the Nucleophile.

This sequence belongs to the peptidase T1B family. As to quaternary structure, the 20S proteasome core is composed of 14 alpha and 14 beta subunits that assemble into four stacked heptameric rings, resulting in a barrel-shaped structure. The two inner rings, each composed of seven catalytic beta subunits, are sandwiched by two outer rings, each composed of seven alpha subunits. The catalytic chamber with the active sites is on the inside of the barrel. Has a gated structure, the ends of the cylinder being occluded by the N-termini of the alpha-subunits. Is capped at one or both ends by the proteasome regulatory ATPase, PAN.

It localises to the cytoplasm. It catalyses the reaction Cleavage of peptide bonds with very broad specificity.. The formation of the proteasomal ATPase PAN-20S proteasome complex, via the docking of the C-termini of PAN into the intersubunit pockets in the alpha-rings, triggers opening of the gate for substrate entry. Interconversion between the open-gate and close-gate conformations leads to a dynamic regulation of the 20S proteasome proteolysis activity. Functionally, component of the proteasome core, a large protease complex with broad specificity involved in protein degradation. The polypeptide is Proteasome subunit beta 2 (Sulfurisphaera tokodaii (strain DSM 16993 / JCM 10545 / NBRC 100140 / 7) (Sulfolobus tokodaii)).